A 343-amino-acid polypeptide reads, in one-letter code: ATP phosphoribosyltransferase regulatory subunit (343 aa).

Residues 324 to 343 (RANGRAKRPARPRRSPPRPR) are disordered. Residues 327–343 (GRAKRPARPRRSPPRPR) show a composition bias toward basic residues.

It belongs to the class-II aminoacyl-tRNA synthetase family. HisZ subfamily. As to quaternary structure, heteromultimer composed of HisG and HisZ subunits.

It localises to the cytoplasm. The protein operates within amino-acid biosynthesis; L-histidine biosynthesis; L-histidine from 5-phospho-alpha-D-ribose 1-diphosphate: step 1/9. Functionally, required for the first step of histidine biosynthesis. May allow the feedback regulation of ATP phosphoribosyltransferase activity by histidine. This Anaeromyxobacter sp. (strain Fw109-5) protein is ATP phosphoribosyltransferase regulatory subunit.